Consider the following 277-residue polypeptide: UPF0276 protein PSEEN3355 (277 aa).

The protein belongs to the UPF0276 family.

In Pseudomonas entomophila (strain L48), this protein is UPF0276 protein PSEEN3355.